Reading from the N-terminus, the 410-residue chain is Kelch domain-containing protein 10 (410 aa).

The disordered stretch occupies residues 1–40 (MSAAQGWDRNRRRGGGAAGGASGVSGAGAAGGGRGTGQLN). At R13 the chain carries Omega-N-methylarginine. Residues 15-36 (GGAAGGASGVSGAGAAGGGRGT) are compositionally biased toward gly residues. Kelch repeat units lie at residues 87-154 (GPDN…DVHV), 155-198 (CNVK…GYIY), 199-260 (STDL…IHAY), 261-319 (NLET…LQTF), 320-364 (QWVK…GSLF), and 365-403 (KIWLVVPSLLELAWEKLLAAFPNLANLSRTQLLHLGLTQ). The interaction with CUL2 stretch occupies residues 369–410 (VVPSLLELAWEKLLAAFPNLANLSRTQLLHLGLTQELIERLK).

This sequence belongs to the KLHDC10 family. Component of a CRL2 E3 ubiquitin-protein ligase complex, also named ECS (Elongin BC-CUL2/5-SOCS-box protein) complex, composed of CUL2, Elongin BC (ELOB and ELOC), RBX1 and substrate-specific adapter KLHDC10. Interacts (via the 6 Kelch repeats) with PPP5C.

It localises to the nucleus. The protein localises to the cytoplasm. The protein operates within protein modification; protein ubiquitination. In terms of biological role, substrate-recognition component of a Cul2-RING (CRL2) E3 ubiquitin-protein ligase complex of the DesCEND (destruction via C-end degrons) pathway, which recognizes a C-degron located at the extreme C-terminus of target proteins, leading to their ubiquitination and degradation. The C-degron recognized by the DesCEND pathway is usually a motif of less than ten residues and can be present in full-length proteins, truncated proteins or proteolytically cleaved forms. The CRL2(KLHDC10) complex specifically recognizes proteins with a proline-glycine (Pro-Gly) or an alanine tail (CAT tail) at the C-terminus, leading to their ubiquitination and degradation. The CRL2(KLHDC10) complex is involved in the ribosome-associated quality control (RQC) pathway, which mediates the extraction of incompletely synthesized nascent chains from stalled ribosomes: CRL2(KLHDC10) acts downstream of NEMF and recognizes CAT tails associated with stalled nascent chains, leading to their ubiquitination and degradation. Participates in the oxidative stress-induced cell death through MAP3K5 activation. Inhibits PPP5C phosphatase activity on MAP3K5. Acts as a regulator of necroptosis. In Rattus norvegicus (Rat), this protein is Kelch domain-containing protein 10.